The chain runs to 173 residues: Co-chaperone protein HscB homolog (173 aa).

The J domain occupies C5–L77.

The protein belongs to the HscB family. In terms of assembly, interacts with HscA and stimulates its ATPase activity.

Its function is as follows. Co-chaperone involved in the maturation of iron-sulfur cluster-containing proteins. Seems to help targeting proteins to be folded toward HscA. The chain is Co-chaperone protein HscB homolog from Pseudomonas paraeruginosa (strain DSM 24068 / PA7) (Pseudomonas aeruginosa (strain PA7)).